The primary structure comprises 143 residues: Ribosome-binding factor A (143 aa).

Residues 119–143 (KAKQQQFTPDTPDNSESVDGEKEQD) are disordered. Over residues 122–133 (QQQFTPDTPDNS) the composition is skewed to polar residues.

This sequence belongs to the RbfA family. In terms of assembly, monomer. Binds 30S ribosomal subunits, but not 50S ribosomal subunits or 70S ribosomes.

It is found in the cytoplasm. In terms of biological role, one of several proteins that assist in the late maturation steps of the functional core of the 30S ribosomal subunit. Associates with free 30S ribosomal subunits (but not with 30S subunits that are part of 70S ribosomes or polysomes). Required for efficient processing of 16S rRNA. May interact with the 5'-terminal helix region of 16S rRNA. The polypeptide is Ribosome-binding factor A (Shewanella frigidimarina (strain NCIMB 400)).